Here is a 243-residue protein sequence, read N- to C-terminus: Uridylate kinase (243 aa).

18–21 (KLGG) is an ATP binding site. Glycine 59 lines the UMP pocket. ATP contacts are provided by glycine 60 and arginine 64. UMP is bound by residues aspartate 79 and 140 to 147 (MGMPYFST). Residues tyrosine 173 and aspartate 176 each contribute to the ATP site.

It belongs to the UMP kinase family. Homohexamer.

The protein resides in the cytoplasm. It carries out the reaction UMP + ATP = UDP + ADP. It functions in the pathway pyrimidine metabolism; CTP biosynthesis via de novo pathway; UDP from UMP (UMPK route): step 1/1. Inhibited by UTP. In terms of biological role, catalyzes the reversible phosphorylation of UMP to UDP. The chain is Uridylate kinase from Corynebacterium glutamicum (strain R).